A 5073-amino-acid polypeptide reads, in one-letter code: Malformin synthetase mlfA (5073 aa).

The adenylation 1 stretch occupies residues 194 to 585; it reads ERHATNRPHS…CGRADTQVKL (392 aa). The 74-residue stretch at 726 to 799 folds into the Carrier 1 domain; it reads SRLEQEVQLA…EAASLAEVQE (74 aa). S760 is subject to O-(pantetheine 4'-phosphoryl)serine. The interval 837–1268 is condensation 1; sequence EDVFPCTTMQ…ALNTLSLLQA (432 aa). The interval 1296–1685 is adenylation 2; that stretch reads DRWVTRHPEG…GRKDTQVKLR (390 aa). Positions 1823–1900 constitute a Carrier 2 domain; sequence TPASELERTL…QLAAEVGEPA (78 aa). At S1860 the chain carries O-(pantetheine 4'-phosphoryl)serine. 2 disordered regions span residues 1901–1930 and 1963–1984; these read GQSA…DGVD and GGSS…SSSK. Composition is skewed to low complexity over residues 1903-1927 and 1965-1982; these read SASS…STND and SSSN…SSSS. Residues 2031–2446 form a condensation 2 region; that stretch reads EDIYPATALQ…AVSCSDTETL (416 aa). The segment at 2469–2861 is adenylation 3; the sequence is SRTPHAPAVC…IGRRDGQLKL (393 aa). Residues 2997–3073 enclose the Carrier 3 domain; it reads RPKTSQEQEM…QLICHLNSIR (77 aa). S3034 is modified (O-(pantetheine 4'-phosphoryl)serine). Condensation stretches follow at residues 3090-3555 and 3576-3995; these read WVAL…TYDQ and DIYP…EQLV. The interval 4020-4410 is adenylation 4; the sequence is HASRQAVCAW…VGRKDNQIKF (391 aa). A Carrier 4 domain is found at 4544 to 4620; that stretch reads MPSTAAERKM…DLGDQARSPN (77 aa). S4581 carries the O-(pantetheine 4'-phosphoryl)serine modification. Residues 4611 to 4633 form a disordered region; that stretch reads DLGDQARSPNADNQRVSTASSAG. Over residues 4617 to 4631 the composition is skewed to polar residues; the sequence is RSPNADNQRVSTASS. A condensation 5 region spans residues 4657–4991; sequence DVLPTTSFQR…LQTIVQHQNN (335 aa).

It belongs to the NRP synthetase family.

Its pathway is secondary metabolite biosynthesis. Functionally, nonribosomal peptide synthetase; part of the gene cluster that mediates the biosynthesis of malformins, cyclic pentapeptides with a disulfide bond between 2 consecutive cysteins, that show potential anti-tumor as well as antimalarial and antitrypanosomal properties. The nonribosomal peptide synthetase mlfA is responsible of the formation of the cyclic pentapeptide. The malformin biosynthesis clusters in malformin-producing fungi also contain enzymes involved in the formation of the disulfide bond between the two consecutive cysteins within malformins, in addition to additional tailoring enzymes such as methyltransferases or oxidoreductases. They are also composed of up to 4 major facilitator superfamily transporters, and transcription factors probably involved in the regulation of the expression of those clusters. The sequence is that of Malformin synthetase mlfA from Aspergillus tubingensis (strain CBS 134.48).